Here is a 272-residue protein sequence, read N- to C-terminus: NH(3)-dependent NAD(+) synthetase (272 aa).

45–52 (GISGGQDS) lines the ATP pocket. Aspartate 51 contributes to the Mg(2+) binding site. Arginine 138 provides a ligand contact to deamido-NAD(+). Threonine 158 lines the ATP pocket. Glutamate 163 contacts Mg(2+). The deamido-NAD(+) site is built by lysine 171 and aspartate 178. ATP contacts are provided by lysine 187 and threonine 209. 258 to 259 (HK) lines the deamido-NAD(+) pocket.

The protein belongs to the NAD synthetase family. In terms of assembly, homodimer.

It carries out the reaction deamido-NAD(+) + NH4(+) + ATP = AMP + diphosphate + NAD(+) + H(+). It functions in the pathway cofactor biosynthesis; NAD(+) biosynthesis; NAD(+) from deamido-NAD(+) (ammonia route): step 1/1. Its function is as follows. Catalyzes the ATP-dependent amidation of deamido-NAD to form NAD. Uses ammonia as a nitrogen source. This chain is NH(3)-dependent NAD(+) synthetase, found in Bacillus cereus (strain Q1).